The following is a 286-amino-acid chain: Nucleotide-binding protein Sfum_2066 (286 aa).

ATP is bound at residue 8–15 (GLSGSGKS). 59-62 (DIRE) is a binding site for GTP.

It belongs to the RapZ-like family.

In terms of biological role, displays ATPase and GTPase activities. In Syntrophobacter fumaroxidans (strain DSM 10017 / MPOB), this protein is Nucleotide-binding protein Sfum_2066.